Here is a 228-residue protein sequence, read N- to C-terminus: Probable GTP-binding protein EngB (228 aa).

One can recognise an EngB-type G domain in the interval 48 to 222 (YGLEVAFVGY…QFVLNNWFSS (175 aa)). GTP-binding positions include 56 to 63 (GYSNSGKS), 83 to 87 (GRTRL), 101 to 104 (DFPG), 168 to 171 (NKMD), and 201 to 203 (FSS). Mg(2+) is bound by residues Ser-63 and Thr-85.

This sequence belongs to the TRAFAC class TrmE-Era-EngA-EngB-Septin-like GTPase superfamily. EngB GTPase family. Mg(2+) serves as cofactor.

Its function is as follows. Necessary for normal cell division and for the maintenance of normal septation. The polypeptide is Probable GTP-binding protein EngB (Buchnera aphidicola subsp. Baizongia pistaciae (strain Bp)).